A 426-amino-acid chain; its full sequence is Serine hydroxymethyltransferase (426 aa).

(6S)-5,6,7,8-tetrahydrofolate is bound by residues Leu-121 and Gly-125–Leu-127. Lys-230 carries the N6-(pyridoxal phosphate)lysine modification. Ser-354–Phe-356 lines the (6S)-5,6,7,8-tetrahydrofolate pocket.

Belongs to the SHMT family. In terms of assembly, homodimer. The cofactor is pyridoxal 5'-phosphate.

It localises to the cytoplasm. The catalysed reaction is (6R)-5,10-methylene-5,6,7,8-tetrahydrofolate + glycine + H2O = (6S)-5,6,7,8-tetrahydrofolate + L-serine. The protein operates within one-carbon metabolism; tetrahydrofolate interconversion. It functions in the pathway amino-acid biosynthesis; glycine biosynthesis; glycine from L-serine: step 1/1. Catalyzes the reversible interconversion of serine and glycine with tetrahydrofolate (THF) serving as the one-carbon carrier. This reaction serves as the major source of one-carbon groups required for the biosynthesis of purines, thymidylate, methionine, and other important biomolecules. Also exhibits THF-independent aldolase activity toward beta-hydroxyamino acids, producing glycine and aldehydes, via a retro-aldol mechanism. In Gloeobacter violaceus (strain ATCC 29082 / PCC 7421), this protein is Serine hydroxymethyltransferase.